The primary structure comprises 620 residues: Glutathione-regulated potassium-efflux system protein KefC (620 aa).

The next 12 membrane-spanning stretches (helical) occupy residues histidine 4–valine 24, leucine 26–leucine 46, serine 54–leucine 74, glycine 90–leucine 110, valine 114–methionine 134, phenylalanine 149–leucine 169, leucine 178–leucine 198, valine 218–glycine 238, glycine 270–valine 290, leucine 294–valine 314, tryptophan 327–glutamine 347, and alanine 359–threonine 379. The RCK N-terminal domain maps to glutamine 399 to threonine 518. The segment at glutamine 599–isoleucine 620 is disordered.

It belongs to the monovalent cation:proton antiporter 2 (CPA2) transporter (TC 2.A.37) family. KefC subfamily. In terms of assembly, homodimer. Interacts with the regulatory subunit KefF.

It localises to the cell inner membrane. In terms of biological role, pore-forming subunit of a potassium efflux system that confers protection against electrophiles. Catalyzes K(+)/H(+) antiport. The chain is Glutathione-regulated potassium-efflux system protein KefC from Salmonella choleraesuis (strain SC-B67).